The primary structure comprises 248 residues: Histone H1, gonadal (248 aa).

2 disordered regions span residues proline 1 to leucine 46 and alanine 115 to lysine 248. Residues alanine 9–alanine 39 show a composition bias toward basic residues. The 75-residue stretch at threonine 41–alanine 115 folds into the H15 domain. Residues lysine 118–lysine 248 are compositionally biased toward basic residues.

Belongs to the histone H1/H5 family. Sperm.

It localises to the nucleus. The protein resides in the chromosome. Histones H1 are necessary for the condensation of nucleosome chains into higher-order structures. This Parechinus angulosus (Angulate sea urchin) protein is Histone H1, gonadal.